Consider the following 355-residue polypeptide: D-alanine--D-alanine ligase (355 aa).

Residues 143–350 (KTIFSNLKIP…IEQLVAKLVD (208 aa)) form the ATP-grasp domain. 178–233 (IKKLNFPVFVKPSNSGSSLGISKVINKSALLKALEKAWEIDARILVEEGLETREIE) lines the ATP pocket. Mg(2+) contacts are provided by D303, E317, and N319.

This sequence belongs to the D-alanine--D-alanine ligase family. Mg(2+) serves as cofactor. The cofactor is Mn(2+).

The protein resides in the cytoplasm. It catalyses the reaction 2 D-alanine + ATP = D-alanyl-D-alanine + ADP + phosphate + H(+). It participates in cell wall biogenesis; peptidoglycan biosynthesis. In terms of biological role, cell wall formation. The chain is D-alanine--D-alanine ligase from Prochlorococcus marinus (strain MIT 9312).